A 275-amino-acid polypeptide reads, in one-letter code: Lacto-N-neotetraose biosynthesis glycosyltransferase LgtB (275 aa).

Belongs to the glycosyltransferase 25 family.

Its pathway is glycan metabolism; lacto-N-neotetraose biosynthesis. It participates in bacterial outer membrane biogenesis; lipooligosaccharide biosynthesis. Adds the second galactose to the lacto-N-tetraose chain in lipooligosaccharide (LOS). The polypeptide is Lacto-N-neotetraose biosynthesis glycosyltransferase LgtB (lgtB) (Neisseria meningitidis serogroup B (strain ATCC BAA-335 / MC58)).